Reading from the N-terminus, the 906-residue chain is Protein translocase subunit SecA (906 aa).

ATP contacts are provided by residues Gln-87, 105-109, and Asp-507; that span reads GEGKT. Cys-890, Cys-892, Cys-901, and His-902 together coordinate Zn(2+).

This sequence belongs to the SecA family. In terms of assembly, monomer and homodimer. Part of the essential Sec protein translocation apparatus which comprises SecA, SecYEG and auxiliary proteins SecDF-YajC and YidC. The cofactor is Zn(2+).

It localises to the cell inner membrane. It is found in the cytoplasm. The enzyme catalyses ATP + H2O + cellular proteinSide 1 = ADP + phosphate + cellular proteinSide 2.. In terms of biological role, part of the Sec protein translocase complex. Interacts with the SecYEG preprotein conducting channel. Has a central role in coupling the hydrolysis of ATP to the transfer of proteins into and across the cell membrane, serving both as a receptor for the preprotein-SecB complex and as an ATP-driven molecular motor driving the stepwise translocation of polypeptide chains across the membrane. This chain is Protein translocase subunit SecA, found in Laribacter hongkongensis (strain HLHK9).